The chain runs to 217 residues: Ras-related protein RABA2a (217 aa).

19–26 (GDSGVGKS) provides a ligand contact to GTP. The Effector region motif lies at 41–49 (SKSTIGVEF). GTP-binding positions include 67–71 (DTAGQ), 125–128 (NKTD), and 155–156 (SA). Cysteine 213 carries the S-palmitoyl cysteine lipid modification. Cysteine 214 bears the Cysteine methyl ester mark. A lipid anchor (S-geranylgeranyl cysteine) is attached at cysteine 214. Positions 215-217 (SSS) are cleaved as a propeptide — removed in mature form.

This sequence belongs to the small GTPase superfamily. Rab family. As to expression, expressed in root tips.

The protein resides in the endosome membrane. Its subcellular location is the golgi apparatus. It is found in the trans-Golgi network membrane. Functionally, intracellular vesicle trafficking and protein transport. The chain is Ras-related protein RABA2a (RABA2A) from Arabidopsis thaliana (Mouse-ear cress).